A 138-amino-acid polypeptide reads, in one-letter code: Large ribosomal subunit protein uL16 (138 aa).

Over residues Met-1–Gln-13 the composition is skewed to basic residues. The tract at residues Met-1–Ala-21 is disordered.

It belongs to the universal ribosomal protein uL16 family. As to quaternary structure, part of the 50S ribosomal subunit.

In terms of biological role, binds 23S rRNA and is also seen to make contacts with the A and possibly P site tRNAs. This is Large ribosomal subunit protein uL16 from Albidiferax ferrireducens (strain ATCC BAA-621 / DSM 15236 / T118) (Rhodoferax ferrireducens).